The sequence spans 634 residues: uncharacterized protein (634 aa).

An N-terminal signal peptide occupies residues 1–40 (MWLQQRLKGLPGLLSSSWARRLLCLLGLLVLLLWFASSGA). Residues 41-589 (RRAAGGLHLP…DEHMAQQDPG (549 aa)) lie on the Extracellular side of the membrane. Asn-363 carries an N-linked (GlcNAc...) asparagine glycan. A helical transmembrane segment spans residues 590 to 610 (LPFLFWFSVASLITLFHLFLF). Residues 611–634 (KLIYNEYCGPGAKPLFRSKEDPSV) lie on the Cytoplasmic side of the membrane.

The protein resides in the membrane. This is an uncharacterized protein from Mus musculus (Mouse).